The primary structure comprises 568 residues: Lariat debranching enzyme (568 aa).

The a divalent metal cation site is built by cysteine 8, histidine 10, aspartate 39, and asparagine 84. The interval 124-154 is lariat recognition loop; the sequence is SGIFKSHDFKKGHFEFPPYNPETLRSVYHIR. Residues histidine 174, histidine 226, and histidine 228 each coordinate a divalent metal cation. The disordered stretch occupies residues 388 to 568; the sequence is IYGERGGKGA…TAVEDEESDS (181 aa). Residues 417-428 are compositionally biased toward polar residues; sequence PSDTSGLSSSYN. The segment covering 432-444 has biased composition (acidic residues); that stretch reads ITIEDEWEEEEDG. Residues 467-480 show a composition bias toward basic and acidic residues; sequence DSDRDSSPQRETAK. Phosphothreonine is present on threonine 478. Low complexity predominate over residues 534–549; it reads GETTQSSAGQTGGTPQ. Phosphoserine is present on serine 568.

Belongs to the lariat debranching enzyme family. The cofactor is Fe(2+). Zn(2+) serves as cofactor. It depends on Mn(2+) as a cofactor.

It is found in the nucleus. Active in presence of diverse metals including Fe(2+), Zn(2+), Mn(2+). Also activated by Ca(2+). Binds two metal cations in two adjacent alpha and beta metal-binding pockets. Cleaves the 2'-5' phosphodiester linkage at the branch point of excised lariat intron RNA and converts them into linear molecules that can be subsequently degraded, thereby facilitating ribonucleotide turnover. Linked to its role in pre-mRNA processing mechanism, may also participate in retrovirus replication and have an antiviral cell-intrinsic defense function. The polypeptide is Lariat debranching enzyme (dbr1) (Danio rerio (Zebrafish)).